The sequence spans 341 residues: Biotin synthase (341 aa).

One can recognise a Radical SAM core domain in the interval 40–267 (AEIQVSTLLS…RSMVRLSAGR (228 aa)). Residues Cys55, Cys59, and Cys62 each coordinate [4Fe-4S] cluster. [2Fe-2S] cluster-binding residues include Cys99, Cys130, Cys190, and Arg262.

It belongs to the radical SAM superfamily. Biotin synthase family. Homodimer. [4Fe-4S] cluster serves as cofactor. [2Fe-2S] cluster is required as a cofactor.

It catalyses the reaction (4R,5S)-dethiobiotin + (sulfur carrier)-SH + 2 reduced [2Fe-2S]-[ferredoxin] + 2 S-adenosyl-L-methionine = (sulfur carrier)-H + biotin + 2 5'-deoxyadenosine + 2 L-methionine + 2 oxidized [2Fe-2S]-[ferredoxin]. It functions in the pathway cofactor biosynthesis; biotin biosynthesis; biotin from 7,8-diaminononanoate: step 2/2. Functionally, catalyzes the conversion of dethiobiotin (DTB) to biotin by the insertion of a sulfur atom into dethiobiotin via a radical-based mechanism. In Xylella fastidiosa (strain M23), this protein is Biotin synthase.